Reading from the N-terminus, the 149-residue chain is Endoribonuclease YbeY (149 aa).

Zn(2+) is bound by residues His106, His110, and His116.

It belongs to the endoribonuclease YbeY family. Zn(2+) serves as cofactor.

The protein resides in the cytoplasm. In terms of biological role, single strand-specific metallo-endoribonuclease involved in late-stage 70S ribosome quality control and in maturation of the 3' terminus of the 16S rRNA. The chain is Endoribonuclease YbeY from Methylobacillus flagellatus (strain ATCC 51484 / DSM 6875 / VKM B-1610 / KT).